A 288-amino-acid polypeptide reads, in one-letter code: Damage-control phosphatase AF_1104 (288 aa).

Residues Cys-7 to Cys-10 carry the Subfamily I CxxC motif motif. Positions 160, 161, and 194 each coordinate Mn(2+). The short motif at Ala-247–Glu-250 is the Subfamily I GNFE-like motif element. A Subfamily I KC motif motif is present at residues Lys-267–Cys-268.

Belongs to the damage-control phosphatase family. Nucleotides phosphatase I subfamily. The cofactor is [2Fe-2S] cluster. Mn(2+) serves as cofactor. Requires Ni(2+) as cofactor.

In terms of biological role, metal-dependent phosphatase with probable damage-control functions. Could hydrolyze oxidatively damaged purine nucleotides or their biosynthetic intermediates. This chain is Damage-control phosphatase AF_1104, found in Archaeoglobus fulgidus (strain ATCC 49558 / DSM 4304 / JCM 9628 / NBRC 100126 / VC-16).